A 22-amino-acid polypeptide reads, in one-letter code: NADH dehydrogenase [ubiquinone] 1 alpha subcomplex subunit 9 (22 aa).

The disordered stretch occupies residues 1–22 (ASNLATGGAGPLIXKGTGGRSS).

The protein belongs to the complex I NDUFA9 subunit family. Complex I is composed of about 45 different subunits. FAD serves as cofactor.

Its subcellular location is the mitochondrion matrix. Its function is as follows. Accessory subunit of the mitochondrial membrane respiratory chain NADH dehydrogenase (Complex I), that is believed not to be involved in catalysis. Complex I functions in the transfer of electrons from NADH to the respiratory chain. The immediate electron acceptor for the enzyme is believed to be ubiquinone. The sequence is that of NADH dehydrogenase [ubiquinone] 1 alpha subcomplex subunit 9 from Solanum tuberosum (Potato).